A 376-amino-acid chain; its full sequence is Polar flagellin A (376 aa).

Coiled coils occupy residues 103-128 (SNSKAERVAIQEEVTALNDELNRIAE) and 310-338 (FQNRFNHAISNLDNINENVNASNSRIKDT).

It belongs to the bacterial flagellin family. As to quaternary structure, heteromer of multiple flagellin subunits including FlaA, FlaB/D, FlaC, FlaE and FlaF.

Its subcellular location is the secreted. It is found in the bacterial flagellum. Functionally, flagellin is the subunit protein which polymerizes to form the filaments of bacterial flagella. FlaA is not essential for polar flagellar synthesis and swimming motility. Homomer of FlaA is able to form a functional filament. This Vibrio parahaemolyticus serotype O3:K6 (strain RIMD 2210633) protein is Polar flagellin A (flaA).